We begin with the raw amino-acid sequence, 256 residues long: 3-dehydroquinate dehydratase (256 aa).

3-dehydroquinate-binding positions include 46 to 48 and Arg-82; that span reads EWR. The active-site Proton donor/acceptor is His-144. Lys-171 functions as the Schiff-base intermediate with substrate in the catalytic mechanism. 3 residues coordinate 3-dehydroquinate: Arg-213, Ser-232, and Gln-236.

It belongs to the type-I 3-dehydroquinase family. As to quaternary structure, homodimer.

The enzyme catalyses 3-dehydroquinate = 3-dehydroshikimate + H2O. Its pathway is metabolic intermediate biosynthesis; chorismate biosynthesis; chorismate from D-erythrose 4-phosphate and phosphoenolpyruvate: step 3/7. Involved in the third step of the chorismate pathway, which leads to the biosynthesis of aromatic amino acids. Catalyzes the cis-dehydration of 3-dehydroquinate (DHQ) and introduces the first double bond of the aromatic ring to yield 3-dehydroshikimate. This chain is 3-dehydroquinate dehydratase, found in Shouchella clausii (strain KSM-K16) (Alkalihalobacillus clausii).